We begin with the raw amino-acid sequence, 386 residues long: Na(+)/H(+) antiporter NhaA (386 aa).

10 consecutive transmembrane segments (helical) span residues 10–30 (EFSI…NVAP), 45–65 (LSFH…IAAV), 84–104 (LNPL…YLAL), 116–136 (GWGI…RLIF), 142–162 (VIAF…VIIA), 169–189 (VLPV…IAFI), 261–281 (IIVD…GFSA), 287–307 (WLVF…FALL), 323–343 (HLLV…FVAG), and 358–378 (GAIL…LLGI).

Belongs to the NhaA Na(+)/H(+) (TC 2.A.33) antiporter family.

It localises to the cell inner membrane. It catalyses the reaction Na(+)(in) + 2 H(+)(out) = Na(+)(out) + 2 H(+)(in). Its function is as follows. Na(+)/H(+) antiporter that extrudes sodium in exchange for external protons. The protein is Na(+)/H(+) antiporter NhaA of Geotalea uraniireducens (strain Rf4) (Geobacter uraniireducens).